The sequence spans 349 residues: tRNA pseudouridine synthase D (349 aa).

Phe27 is a binding site for substrate. Asp80 acts as the Nucleophile in catalysis. Asn129 provides a ligand contact to substrate. Residues 155 to 303 (GVPNYFGAQR…VEAARRAMLL (149 aa)) enclose the TRUD domain. Phe329 contributes to the substrate binding site.

This sequence belongs to the pseudouridine synthase TruD family.

It catalyses the reaction uridine(13) in tRNA = pseudouridine(13) in tRNA. Responsible for synthesis of pseudouridine from uracil-13 in transfer RNAs. The protein is tRNA pseudouridine synthase D of Enterobacter sp. (strain 638).